We begin with the raw amino-acid sequence, 169 residues long: NADH-quinone oxidoreductase subunit I (169 aa).

2 consecutive 4Fe-4S ferredoxin-type domains span residues 61 to 90 (RRYD…IESE) and 100 to 129 (TRYD…ETHI). [4Fe-4S] cluster is bound by residues Cys-70, Cys-73, Cys-76, Cys-80, Cys-109, Cys-112, Cys-115, and Cys-119.

The protein belongs to the complex I 23 kDa subunit family. In terms of assembly, NDH-1 is composed of 14 different subunits. Subunits NuoA, H, J, K, L, M, N constitute the membrane sector of the complex. [4Fe-4S] cluster is required as a cofactor.

The protein resides in the cell inner membrane. It carries out the reaction a quinone + NADH + 5 H(+)(in) = a quinol + NAD(+) + 4 H(+)(out). In terms of biological role, NDH-1 shuttles electrons from NADH, via FMN and iron-sulfur (Fe-S) centers, to quinones in the respiratory chain. The immediate electron acceptor for the enzyme in this species is believed to be ubiquinone. Couples the redox reaction to proton translocation (for every two electrons transferred, four hydrogen ions are translocated across the cytoplasmic membrane), and thus conserves the redox energy in a proton gradient. This chain is NADH-quinone oxidoreductase subunit I, found in Verminephrobacter eiseniae (strain EF01-2).